Reading from the N-terminus, the 902-residue chain is MDTSRTSLFLCSVLYSLQLVGSARPGKQHRSCPTPCECEQDGMLVRVDCSDRGLTGLPRNISIFTSYLDLSMNNITKLPSNALHNLHFLEELRLAGNDLTYIPKGAFAGLGSLKVLMLQNNLLRQVPSEALQNLRSLQSLRLDANHISYVPPSSFNGLFSLRHLWLDDNSLTEIPVRALESLSALQAMTLALNKIHHIPDYAFGNLSSLVVLHLHNNRIYSLGKKCFDGLHSLETLDLNYNNLDEFPAAIKTLKNLKELGFHSNNIKSIPEQAFIGNPSLITTHFYDNPIQHVGRSAFQHLPELRTLILNGASQITEFPDLTGTTSLESLTLTGAQLVYLPSAVCNQLPNLKVIDLSYNHIKDLPSFSGCQRLQKIDLRHNEVYEIRFTTFQQLVGLRSLDLAWNKIAVIHPSSFSSLPSLIKLDLSSNHLTSFPVTGLHGLTHLKLTGNSALQDLIPSEHFPKLRVMEMPYAYQCCAFAVCENLKHSGQMNKDENSSADDFYRKDIGLLHLQDDRDFEDFLLDFEEDVKVLHSVQCTPSAGPFKPCDHLFGSWLTRIGVWLIVLLSFVCNALVIATVFRPLSYVPSIKLLIGLIAIINTLMGLSSGVLATVDALTFGNFAQYGAWWESGVGCQITGFLSVFAAETSVFLLTVAALERGFSIKCTTKFETKSSFLSVKLSIVFCFLLSIIIAVSPLMSGSTYGTSPFCFPLLFGDPSSMVFMVALVLLNSLCFLVMTVAYTKLYCSLEKGELENVWDCSMVKHIALLLFTNCILYCPVAFLSFSSLLNLTFISPEVNKSILLLIIPLPACLNPLLYILFNPHFKEDIGSLKNGDMLWSRSRHTSFASVSSEDAEKQSCDSTQALVTFASSSISFDLPATSSSSSYQMSNNYKLSAVAFVPCH.

The N-terminal stretch at 1–22 (MDTSRTSLFLCSVLYSLQLVGS) is a signal peptide. Residues 23-557 (ARPGKQHRSC…DHLFGSWLTR (535 aa)) lie on the Extracellular side of the membrane. Disulfide bonds link Cys32/Cys38 and Cys36/Cys49. Residues 32–61 (CPTPCECEQDGMLVRVDCSDRGLTGLPRNI) enclose the LRRNT domain. LRR repeat units follow at residues 41–61 (DGMLVRVDCSDRGLTGLPRNI), 62–85 (SIFTSYLDLSMNNITKLPSNALHN), 86–109 (LHFLEELRLAGNDLTYIPKGAFAG), 111–133 (GSLKVLMLQNNLLRQVPSEALQN), 134–157 (LRSLQSLRLDANHISYVPPSSFNG), 159–181 (FSLRHLWLDDNSLTEIPVRALES), 182–205 (LSALQAMTLALNKIHHIPDYAFGN), 207–229 (SSLVVLHLHNNRIYSLGKKCFDG), 230–253 (LHSLETLDLNYNNLDEFPAAIKTL), 254–276 (KNLKELGFHSNNIKSIPEQAFIG), 278–300 (PSLITTHFYDNPIQHVGRSAFQH), 301–324 (LPELRTLILNGASQITEFPDLTGT), 325–347 (TSLESLTLTGAQLVYLPSAVCNQ), 348–372 (LPNLKVIDLSYNHIKDLPSFSGCQR), 374–393 (QKIDLRHNEVYEIRFTTFQQ), 394–417 (LVGLRSLDLAWNKIAVIHPSSFSS), and 418–441 (LPSLIKLDLSSNHLTSFPVTGLHG). 2 N-linked (GlcNAc...) asparagine glycosylation sites follow: Asn60 and Asn74. Residue Asn205 is glycosylated (N-linked (GlcNAc...) asparagine). A disulfide bond links Cys345 and Cys370. A disulfide bridge links Cys476 with Cys537. Asn496 carries an N-linked (GlcNAc...) asparagine glycan. A helical membrane pass occupies residues 558-578 (IGVWLIVLLSFVCNALVIATV). Residues 579–589 (FRPLSYVPSIK) lie on the Cytoplasmic side of the membrane. The chain crosses the membrane as a helical span at residues 590 to 610 (LLIGLIAIINTLMGLSSGVLA). One copy of the LRR 18 repeat lies at 598–619 (INTLMGLSSGVLATVDALTFGN). Residues 611–634 (TVDALTFGNFAQYGAWWESGVGCQ) are Extracellular-facing. Cys633 and Cys708 are disulfide-bonded. The chain crosses the membrane as a helical span at residues 635–655 (ITGFLSVFAAETSVFLLTVAA). The Cytoplasmic segment spans residues 656-678 (LERGFSIKCTTKFETKSSFLSVK). The helical transmembrane segment at 679–699 (LSIVFCFLLSIIIAVSPLMSG) threads the bilayer. Residues 700–718 (STYGTSPFCFPLLFGDPSS) lie on the Extracellular side of the membrane. Residues 719 to 739 (MVFMVALVLLNSLCFLVMTVA) traverse the membrane as a helical segment. Residues 740–763 (YTKLYCSLEKGELENVWDCSMVKH) are Cytoplasmic-facing. The helical transmembrane segment at 764–784 (IALLLFTNCILYCPVAFLSFS) threads the bilayer. The Extracellular portion of the chain corresponds to 785–798 (SLLNLTFISPEVNK). Residues Asn788 and Asn797 are each glycosylated (N-linked (GlcNAc...) asparagine). Residues 799–819 (SILLLIIPLPACLNPLLYILF) traverse the membrane as a helical segment. At 820–902 (NPHFKEDIGS…LSAVAFVPCH (83 aa)) the chain is on the cytoplasmic side.

Belongs to the G-protein coupled receptor 1 family. Expressed in the developing epithelial stem cells of the intestine.

The protein resides in the cell membrane. It is found in the golgi apparatus. The protein localises to the trans-Golgi network membrane. Functionally, receptor for R-spondins that potentiates the canonical Wnt signaling pathway and acts as a stem cell marker of the intestinal epithelium and the hair follicle. Upon binding to R-spondins (RSPO1, RSPO2, RSPO3 or RSPO4), associates with phosphorylated LRP6 and frizzled receptors that are activated by extracellular Wnt receptors, triggering the canonical Wnt signaling pathway to increase expression of target genes. In contrast to classical G-protein coupled receptors, does not activate heterotrimeric G-proteins to transduce the signal. Involved in the development and/or maintenance of the adult intestinal stem cells during postembryonic development. The protein is Leucine-rich repeat-containing G-protein coupled receptor 5A (lgr5-a) of Xenopus laevis (African clawed frog).